The chain runs to 347 residues: NADH-ubiquinone oxidoreductase chain 2 (347 aa).

9 helical membrane-spanning segments follow: residues 3-23 (PPIF…VLIS), 25-45 (HWLL…PILM), 59-79 (YFLT…INLL), 111-131 (FHFW…MILL), 149-169 (INPN…GWGG), 200-220 (LMHL…MLFM), 242-262 (LLIL…GFIP), 274-294 (NMII…YFYM), and 325-345 (LLPP…MMLI).

Belongs to the complex I subunit 2 family. As to quaternary structure, core subunit of respiratory chain NADH dehydrogenase (Complex I) which is composed of 45 different subunits. Interacts with TMEM242.

It is found in the mitochondrion inner membrane. The enzyme catalyses a ubiquinone + NADH + 5 H(+)(in) = a ubiquinol + NAD(+) + 4 H(+)(out). Functionally, core subunit of the mitochondrial membrane respiratory chain NADH dehydrogenase (Complex I) which catalyzes electron transfer from NADH through the respiratory chain, using ubiquinone as an electron acceptor. Essential for the catalytic activity and assembly of complex I. This is NADH-ubiquinone oxidoreductase chain 2 from Ailurus fulgens (Himalayan red panda).